The sequence spans 67 residues: Large ribosomal subunit protein bL35 (67 aa).

It belongs to the bacterial ribosomal protein bL35 family.

The chain is Large ribosomal subunit protein bL35 from Synechocystis sp. (strain ATCC 27184 / PCC 6803 / Kazusa).